A 204-amino-acid polypeptide reads, in one-letter code: MLRIAIAKGRLMDSLINYLDVIEYTTLSETLKNRERQLLLSVDNIECILVKGSDVPIYVEQGMADIGIVGSDILDERQYNVNNLLNMPFGACHFAVAAKPETTNYRKIATSYVHTAETYFKSKGIDVELIKLNGSVELAGVVDMVDGIVDIVQTGTTLKANGLVEKQHISDINARLITNKAAYFKKSQLIEQFIRSLEVSIANA.

The protein belongs to the ATP phosphoribosyltransferase family. Short subfamily. In terms of assembly, heteromultimer composed of HisG and HisZ subunits.

The protein resides in the cytoplasm. The catalysed reaction is 1-(5-phospho-beta-D-ribosyl)-ATP + diphosphate = 5-phospho-alpha-D-ribose 1-diphosphate + ATP. Its pathway is amino-acid biosynthesis; L-histidine biosynthesis; L-histidine from 5-phospho-alpha-D-ribose 1-diphosphate: step 1/9. In terms of biological role, catalyzes the condensation of ATP and 5-phosphoribose 1-diphosphate to form N'-(5'-phosphoribosyl)-ATP (PR-ATP). Has a crucial role in the pathway because the rate of histidine biosynthesis seems to be controlled primarily by regulation of HisG enzymatic activity. The sequence is that of ATP phosphoribosyltransferase from Staphylococcus aureus (strain USA300).